A 43-amino-acid chain; its full sequence is Bacteriocin weissellin-A (43 aa).

The cysteines at positions 9 and 14 are disulfide-linked.

Its subcellular location is the secreted. Highly active against Gram-positive bacteria M.flavus strain ATCC 400, M.luteus strain CECT241, C.soprogenes strain NCTC533, L.monocytogenes strain ATCC 19111, L.inocua strain ATCC BAA-680D and S.carnosus strain LMG13564. Less active against B.cereus strain LMG13569, C.thiaminolyticum strain ATCC 15579, E.faecalis strain NCTC8176, L.lactis strain LM0230, L.casei strain ATCC 344, L.lactis strain IL1403, L.jensenii strain ATCC 25258, L.plantarum strain CECT220, L.brevis strain ATCC 8287, L.bulgaricus strain LMG13551, P.acidilactici strain ATCC 25740, P.pentosaceus strain ATCC 33316 and P.pentosaceus strain LMG13560. Weakly active against L.mesenteroides strain ATCC 19254, L.lactis strain ATCC 1454, L.sakei strain CECT906T, L.lactis subsp. cremoris strain MC1363 and L.curvatus strain ATCC 51436. Not active against Gram-negative bacterium S.enteritidis strain ATCC 13076. The mode of action appears to be non-lytic. Inactivated by proteinase K, but insensitive to trypsin, alpha-chymotrypsin, pepsin and papain. The polypeptide is Bacteriocin weissellin-A (Weissella paramesenteroides (Leuconostoc paramesenteroides)).